The primary structure comprises 190 residues: Nucleoside triphosphate pyrophosphatase (190 aa).

D69 (proton acceptor) is an active-site residue.

It belongs to the Maf family. A divalent metal cation serves as cofactor.

It is found in the cytoplasm. It catalyses the reaction a ribonucleoside 5'-triphosphate + H2O = a ribonucleoside 5'-phosphate + diphosphate + H(+). The enzyme catalyses a 2'-deoxyribonucleoside 5'-triphosphate + H2O = a 2'-deoxyribonucleoside 5'-phosphate + diphosphate + H(+). In terms of biological role, nucleoside triphosphate pyrophosphatase. May have a dual role in cell division arrest and in preventing the incorporation of modified nucleotides into cellular nucleic acids. This is Nucleoside triphosphate pyrophosphatase from Helicobacter pylori (strain ATCC 700392 / 26695) (Campylobacter pylori).